The sequence spans 429 residues: SVP1-like protein 2 (429 aa).

4 WD repeats span residues 10–48 (PVLAPVLSVTFNHDNSCFAVGLDHGFRIYESGSCVLRTS), 50–96 (DFGA…QVGV), 178–218 (AHTS…RLYE), and 223–262 (IDKAIIFSIGFSPSGKYLACTSDKSTLHVFDVTRPGGTRP). Residues 262–297 (PITSNGGTAYAAGEPSVTGNNRPSSPYSVASSSGGG) form a disordered region.

The protein belongs to the WD repeat PROPPIN family.

Its subcellular location is the vacuole membrane. The protein localises to the cytoplasmic vesicle membrane. Its function is as follows. Involved in mitochondrial or peroxisomal functions and amino acid signaling pathways. This is SVP1-like protein 2 (apg-14) from Neurospora crassa (strain ATCC 24698 / 74-OR23-1A / CBS 708.71 / DSM 1257 / FGSC 987).